Here is a 397-residue protein sequence, read N- to C-terminus: Phosphoglycerate kinase (397 aa).

Residues 21–23 (DFN), Arg-37, 60–63 (HLGR), Arg-119, and Arg-152 each bind substrate. Residues Lys-202, Gly-294, Glu-325, and 351-354 (GGDS) contribute to the ATP site.

It belongs to the phosphoglycerate kinase family. As to quaternary structure, monomer.

The protein resides in the cytoplasm. The catalysed reaction is (2R)-3-phosphoglycerate + ATP = (2R)-3-phospho-glyceroyl phosphate + ADP. It functions in the pathway carbohydrate degradation; glycolysis; pyruvate from D-glyceraldehyde 3-phosphate: step 2/5. The sequence is that of Phosphoglycerate kinase from Pseudothermotoga lettingae (strain ATCC BAA-301 / DSM 14385 / NBRC 107922 / TMO) (Thermotoga lettingae).